Here is a 62-residue protein sequence, read N- to C-terminus: Teretoxin Tan1.1 (62 aa).

Residues M1–F21 form the signal peptide. Residues P22–R38 constitute a propeptide that is removed on maturation.

Belongs to the teretoxin A (TA) superfamily. In terms of processing, contains 2 disulfide bonds. In terms of tissue distribution, expressed by the venom duct.

It is found in the secreted. The chain is Teretoxin Tan1.1 from Terebra anilis (Auger snail).